Reading from the N-terminus, the 400-residue chain is Gap junction alpha-8 protein (400 aa).

Residues 2-12 (GDWSFLGNILE) lie within the membrane without spanning it. Residues 13-21 (QVNEQSTVI) lie on the Cytoplasmic side of the membrane. The chain crosses the membrane as a helical span at residues 22–42 (GRVWLTVLFIFRILILGTAAE). At 43–71 (LVWGDEQSDFVCNTQQPGCENVCYDEAFP) the chain is on the extracellular side. Cystine bridges form between cysteine 54/cysteine 196, cysteine 61/cysteine 190, and cysteine 65/cysteine 185. Residues 72–92 (ISHIRLWVLQIIFVSTPSLVY) traverse the membrane as a helical segment. Residues 93–156 (FGHAVHHVRM…GTLLRTYILH (64 aa)) are Cytoplasmic-facing. Positions 104–118 (EKRKEREEAERRQQA) are enriched in basic and acidic residues. The tract at residues 104–139 (EKRKEREEAERRQQAEVDEEKLPLAPNQNKGNNPDG) is disordered. Residues 129-138 (PNQNKGNNPD) show a composition bias toward polar residues. A helical membrane pass occupies residues 157 to 177 (IIFKTLFEVGFIVGQYFLYGF). Topologically, residues 178–205 (RILPLYRCGRWPCPNLVDCFVSRPTEKT) are extracellular. Residues 206 to 226 (IFIMFMLVVAAVSLFLNLVEI) form a helical membrane-spanning segment. The Cytoplasmic portion of the chain corresponds to 227-400 (SHLILKRIRR…SRARSDDLTV (174 aa)). Residues 323–400 (YAQAKEPEEE…SRARSDDLTV (78 aa)) are disordered. The segment covering 327–336 (KEPEEEKVKA) has biased composition (basic and acidic residues). Positions 337 to 346 (EEEEEQEEEQ) are enriched in acidic residues. Serine 364 carries the post-translational modification Phosphoserine; by CK2. The segment covering 381 to 392 (RSLSRLSKASSR) has biased composition (low complexity).

The protein belongs to the connexin family. Alpha-type (group II) subfamily. In terms of assembly, a hemichannel or connexon is composed of a hexamer of connexins. A functional gap junction is formed by the apposition of two hemichannels. Forms heteromeric channels with GJA3. During early stages of lens development, interacts with the C-terminus of MIP. Proteolytically cleaved by caspase-3 during lens development. In terms of processing, phosphorylated on Ser-364; which inhibits cleavage by caspase-3.

The protein resides in the cell membrane. It is found in the cell junction. It localises to the gap junction. Structural component of eye lens gap junctions. Gap junctions are dodecameric channels that connect the cytoplasm of adjoining cells. They are formed by the docking of two hexameric hemichannels, one from each cell membrane. Small molecules and ions diffuse from one cell to a neighboring cell via the central pore. In Gallus gallus (Chicken), this protein is Gap junction alpha-8 protein (GJA8).